The primary structure comprises 229 residues: 7-cyano-7-deazaguanine synthase (229 aa).

8-18 (CSGGLDSSVIA) contributes to the ATP binding site. C190, C203, C206, and C209 together coordinate Zn(2+).

Belongs to the QueC family. It depends on Zn(2+) as a cofactor.

It carries out the reaction 7-carboxy-7-deazaguanine + NH4(+) + ATP = 7-cyano-7-deazaguanine + ADP + phosphate + H2O + H(+). It functions in the pathway purine metabolism; 7-cyano-7-deazaguanine biosynthesis. Its function is as follows. Catalyzes the ATP-dependent conversion of 7-carboxy-7-deazaguanine (CDG) to 7-cyano-7-deazaguanine (preQ(0)). The polypeptide is 7-cyano-7-deazaguanine synthase (Methanopyrus kandleri (strain AV19 / DSM 6324 / JCM 9639 / NBRC 100938)).